A 75-amino-acid chain; its full sequence is Large ribosomal subunit protein bL28 (75 aa).

Residues 1 to 21 (MARVCQVTGKRPMSGNKRSHA) are disordered.

Belongs to the bacterial ribosomal protein bL28 family.

The chain is Large ribosomal subunit protein bL28 from Blochmanniella pennsylvanica (strain BPEN).